Reading from the N-terminus, the 66-residue chain is UPF0337 protein M6_Spy1542 (66 aa).

Residues 1–10 are compositionally biased toward basic and acidic residues; it reads MSEEKLKAKV. The interval 1-22 is disordered; that stretch reads MSEEKLKAKVEQASGSLKEGAG.

The protein belongs to the UPF0337 (CsbD) family.

The protein is UPF0337 protein M6_Spy1542 of Streptococcus pyogenes serotype M6 (strain ATCC BAA-946 / MGAS10394).